We begin with the raw amino-acid sequence, 608 residues long: DNA mismatch repair protein MutL (608 aa).

The protein belongs to the DNA mismatch repair MutL/HexB family.

Functionally, this protein is involved in the repair of mismatches in DNA. It is required for dam-dependent methyl-directed DNA mismatch repair. May act as a 'molecular matchmaker', a protein that promotes the formation of a stable complex between two or more DNA-binding proteins in an ATP-dependent manner without itself being part of a final effector complex. The polypeptide is DNA mismatch repair protein MutL (Anaeromyxobacter dehalogenans (strain 2CP-C)).